Reading from the N-terminus, the 86-residue chain is Small ribosomal subunit protein bS16 (86 aa).

It belongs to the bacterial ribosomal protein bS16 family.

This chain is Small ribosomal subunit protein bS16, found in Trichormus variabilis (strain ATCC 29413 / PCC 7937) (Anabaena variabilis).